Consider the following 863-residue polypeptide: Bifunctional uridylyltransferase/uridylyl-removing enzyme (863 aa).

The tract at residues 1-328 (MLFSPTLSSP…PSNQDTVIDQ (328 aa)) is uridylyltransferase. Residues 329–687 (LDDDFQLINQ…ISNRFSLGGT (359 aa)) form a uridylyl-removing region. The HD domain occupies 446 to 568 (VDEHTLRVML…VQNQVRLDYL (123 aa)). 2 consecutive ACT domains span residues 688–772 (EVFI…PNRQ) and 794–863 (QMEL…RNIG).

Belongs to the GlnD family. Requires Mg(2+) as cofactor.

It carries out the reaction [protein-PII]-L-tyrosine + UTP = [protein-PII]-uridylyl-L-tyrosine + diphosphate. The catalysed reaction is [protein-PII]-uridylyl-L-tyrosine + H2O = [protein-PII]-L-tyrosine + UMP + H(+). Its activity is regulated as follows. Uridylyltransferase (UTase) activity is inhibited by glutamine, while glutamine activates uridylyl-removing (UR) activity. Its function is as follows. Modifies, by uridylylation and deuridylylation, the PII regulatory proteins (GlnB and homologs), in response to the nitrogen status of the cell that GlnD senses through the glutamine level. Under low glutamine levels, catalyzes the conversion of the PII proteins and UTP to PII-UMP and PPi, while under higher glutamine levels, GlnD hydrolyzes PII-UMP to PII and UMP (deuridylylation). Thus, controls uridylylation state and activity of the PII proteins, and plays an important role in the regulation of nitrogen assimilation and metabolism. This is Bifunctional uridylyltransferase/uridylyl-removing enzyme from Haemophilus influenzae (strain 86-028NP).